The primary structure comprises 1612 residues: DNA (cytosine-5)-methyltransferase PliMCI (1612 aa).

Residues 7–101 form the DMAP1-binding domain; it reads CDQVIPPNVR…NGDTKEEASS (95 aa). Residues 87 to 338 are disordered; sequence TCSPVNGDTK…TAESKQPPLR (252 aa). Over residues 94–110 the composition is skewed to basic and acidic residues; it reads DTKEEASSNGKDDEKAE. Positions 115-131 are enriched in low complexity; sequence NGTTSNGSTTNGSSGSS. Over residues 132-142 the composition is skewed to polar residues; the sequence is KANGHTNGGYV. The segment covering 143–154 has biased composition (low complexity); it reads QSSSQEETGTSQ. Composition is skewed to basic and acidic residues over residues 193–212, 222–232, and 260–289; these read VLGDDERDGVEKKEGEKKDV, EESATPDEKTL, and KKEEEKMEESSSMEVDKKEMENGDNGKKEE. The segment at 626–672 adopts a CXXC-type zinc-finger fold; it reads ASERKKRCGVCEICQAPDCGKCTACKDMIKFGGSGKAKQACKDRRCP. Cys633, Cys636, Cys639, Cys644, Cys647, Cys650, Cys666, and Cys671 together coordinate Zn(2+). Residues 677 to 708 are disordered; that stretch reads QEADENDIDEMDNSSNKENKDEKKAKKGRKLE. Residues 678–688 show a composition bias toward acidic residues; it reads EADENDIDEMD. The span at 691–708 shows a compositional bias: basic and acidic residues; the sequence is SNKENKDEKKAKKGRKLE. BAH domains lie at 743–871 and 967–1089; these read EKIE…EDYE and NYRK…EDPP. A disordered region spans residues 1084–1121; that stretch reads CFEDPPSKSRSTRMKGKGKGKGKGKAKGKIAVEKEEEK. The segment covering 1093–1111 has biased composition (basic residues); the sequence is RSTRMKGKGKGKGKGKAKG. The SAM-dependent MTase C5-type domain maps to 1131 to 1590; the sequence is LKCLDVFAGC…MEIKVCLQTK (460 aa). S-adenosyl-L-methionine-binding positions include 1142–1143, 1160–1161, 1182–1183, and Cys1183; these read GL, EK, and DC. Cys1218 is an active-site residue. 2 residues coordinate S-adenosyl-L-methionine: Asn1569 and Val1571.

It belongs to the class I-like SAM-binding methyltransferase superfamily. C5-methyltransferase family.

It localises to the nucleus. It carries out the reaction a 2'-deoxycytidine in DNA + S-adenosyl-L-methionine = a 5-methyl-2'-deoxycytidine in DNA + S-adenosyl-L-homocysteine + H(+). Functionally, methylates CpG residues. The sequence is that of DNA (cytosine-5)-methyltransferase PliMCI (DNMT) from Paracentrotus lividus (Common sea urchin).